Here is a 224-residue protein sequence, read N- to C-terminus: Putative MgpC-like protein MPN_150 (224 aa).

This sequence belongs to the MgpC family.

In Mycoplasma pneumoniae (strain ATCC 29342 / M129 / Subtype 1) (Mycoplasmoides pneumoniae), this protein is Putative MgpC-like protein MPN_150.